The chain runs to 550 residues: CTP synthase (550 aa).

The interval 1–270 is amidoligase domain; sequence MTKYVFVTGG…DRIICEELKL (270 aa). Ser-13 contacts CTP. Ser-13 provides a ligand contact to UTP. Residues 14–19 and Asp-71 each bind ATP; that span reads SLGKGI. Residues Asp-71 and Glu-144 each coordinate Mg(2+). Residues 151-153, 191-196, and Lys-227 contribute to the CTP site; these read DIE and KTKPTQ. UTP contacts are provided by residues 191–196 and Lys-227; that span reads KTKPTQ. The 253-residue stretch at 295–547 folds into the Glutamine amidotransferase type-1 domain; it reads TIGMVGKYVD…VEAALANKQA (253 aa). Gly-356 contacts L-glutamine. Catalysis depends on Cys-383, which acts as the Nucleophile; for glutamine hydrolysis. L-glutamine-binding positions include 384 to 387, Glu-407, and Arg-473; that span reads LGMQ. Residues His-520 and Glu-522 contribute to the active site.

The protein belongs to the CTP synthase family. In terms of assembly, homotetramer.

The catalysed reaction is UTP + L-glutamine + ATP + H2O = CTP + L-glutamate + ADP + phosphate + 2 H(+). The enzyme catalyses L-glutamine + H2O = L-glutamate + NH4(+). It carries out the reaction UTP + NH4(+) + ATP = CTP + ADP + phosphate + 2 H(+). The protein operates within pyrimidine metabolism; CTP biosynthesis via de novo pathway; CTP from UDP: step 2/2. With respect to regulation, allosterically activated by GTP, when glutamine is the substrate; GTP has no effect on the reaction when ammonia is the substrate. The allosteric effector GTP functions by stabilizing the protein conformation that binds the tetrahedral intermediate(s) formed during glutamine hydrolysis. Inhibited by the product CTP, via allosteric rather than competitive inhibition. In terms of biological role, catalyzes the ATP-dependent amination of UTP to CTP with either L-glutamine or ammonia as the source of nitrogen. Regulates intracellular CTP levels through interactions with the four ribonucleotide triphosphates. This is CTP synthase from Burkholderia lata (strain ATCC 17760 / DSM 23089 / LMG 22485 / NCIMB 9086 / R18194 / 383).